A 280-amino-acid chain; its full sequence is L-aspartate dehydrogenase (280 aa).

2 residues coordinate NAD(+): Ala134 and Asn202. His232 is a catalytic residue.

The protein belongs to the L-aspartate dehydrogenase family.

The catalysed reaction is L-aspartate + NADP(+) + H2O = oxaloacetate + NH4(+) + NADPH + H(+). The enzyme catalyses L-aspartate + NAD(+) + H2O = oxaloacetate + NH4(+) + NADH + H(+). It functions in the pathway cofactor biosynthesis; NAD(+) biosynthesis; iminoaspartate from L-aspartate (dehydrogenase route): step 1/1. Its function is as follows. Specifically catalyzes the NAD or NADP-dependent dehydrogenation of L-aspartate to iminoaspartate. The chain is L-aspartate dehydrogenase from Bradyrhizobium diazoefficiens (strain JCM 10833 / BCRC 13528 / IAM 13628 / NBRC 14792 / USDA 110).